Consider the following 273-residue polypeptide: Undecaprenyl-diphosphatase (273 aa).

Transmembrane regions (helical) follow at residues 6-26 (SLLI…LPVS), 45-65 (AKTF…VMFW), 90-110 (LTLI…LLFH), 116-136 (LFNP…LIAA), 190-210 (YAAS…ATAL), 222-242 (GDIP…LIAI), and 252-272 (ISFI…YVVF).

It belongs to the UppP family.

Its subcellular location is the cell inner membrane. The catalysed reaction is di-trans,octa-cis-undecaprenyl diphosphate + H2O = di-trans,octa-cis-undecaprenyl phosphate + phosphate + H(+). Catalyzes the dephosphorylation of undecaprenyl diphosphate (UPP). Confers resistance to bacitracin. This Escherichia coli O157:H7 protein is Undecaprenyl-diphosphatase.